Consider the following 67-residue polypeptide: MKGFLFLLLTISLLVMIQIQTGVLGNSTTPRMTTKKVKSATPALSSLGGGSVLLFLANTLIQLFYLS.

Positions 1–25 (MKGFLFLLLTISLLVMIQIQTGVLG) are cleaved as a signal peptide. N-linked (GlcNAc...) asparagine glycosylation occurs at Asn-26. A lipid anchor (GPI-anchor amidated serine) is attached at Ser-45. Positions 46–67 (SLGGGSVLLFLANTLIQLFYLS) are cleaved as a propeptide — removed in mature form.

As to expression, epididymis. Highest levels are found in the distal corpus and cauda. Little or no expression in the caput and proximal cauda regions.

Its subcellular location is the cell membrane. In terms of biological role, may play a role in carrying and orienting carbohydrate, as well as having a more specific role. In Canis lupus familiaris (Dog), this protein is CAMPATH-1 antigen (CD52).